A 181-amino-acid polypeptide reads, in one-letter code: Reverse rubrerythrin-1 (181 aa).

The Rubredoxin-like domain maps to 1-35 (MKKFKCVVCGYIYTGEDAPEKCPVCGAGKDKFVEV). 9 residues coordinate Fe cation: cysteine 6, cysteine 9, cysteine 22, cysteine 25, glutamate 69, glutamate 102, glutamate 132, glutamate 165, and histidine 168. In terms of domain architecture, Ferritin-like diiron spans 52-181 (KGVDKEVLEG…FRGLLNRYFK (130 aa)).

In terms of assembly, homodimer. It depends on Fe(3+) as a cofactor.

The enzyme catalyses H2O2 + NADH + H(+) = NAD(+) + 2 H2O. Its function is as follows. Functions as the terminal component of an NADH peroxidase (NADH:H(2)O(2) oxidoreductase) when using NADH:rubredoxin oxidoreductase (NROR) and rubredoxin (Rd) as electron transport intermediaries from NADH to revRbr 1. Plays an important role in the oxidative stress defense system in C.acetobutylicum, an obligate anaerobic bacterium. Also exhibits NADH oxidase (NADH:O(2) oxidoreductase) activity in vitro, which is 100-fold lesser than that of FprA1/2 using the same electron transfer components. Therefore, its predominant function is most likely as a scavenger of its preferred substrate, H(2)O(2). In Clostridium acetobutylicum (strain ATCC 824 / DSM 792 / JCM 1419 / IAM 19013 / LMG 5710 / NBRC 13948 / NRRL B-527 / VKM B-1787 / 2291 / W), this protein is Reverse rubrerythrin-1 (rbr3A).